The chain runs to 261 residues: Oligodendrocyte transcription factor 1 (261 aa).

The segment at 41-105 is disordered; the sequence is PPISSSSSTS…LRRKINSRER (65 aa). Residues 44–56 are compositionally biased toward low complexity; the sequence is SSSSSTSSSSTAS. The bHLH domain maps to 95–154; sequence QLRRKINSRERKRMQDLNLAMDALREVILPYSAAHCQGAPGRKLSKIATLLLARNYILLL.

As to expression, expressed specifically in the brain, including the corpus callosum, hippocampal and cerebral white matter. Also detected in cells scattered in gray matter, most probably in oligodendrocytes.

Its subcellular location is the nucleus. Its function is as follows. Promotes formation and maturation of oligodendrocytes, especially within the brain. Cooperates with OLIG2 to establish the pMN domain of the embryonic neural tube. The sequence is that of Oligodendrocyte transcription factor 1 (Olig1) from Rattus norvegicus (Rat).